The primary structure comprises 198 residues: Nucleoid occlusion factor SlmA (198 aa).

Residues 10–70 (NRREEILQSL…SLIEFIEDSL (61 aa)) form the HTH tetR-type domain. The H-T-H motif DNA-binding region spans 33–52 (TTAKLAASVGVSEAALYRHF). A coiled-coil region spans residues 117–144 (EQDRLQGRINQLFERIEAQLRQVLREKR).

The protein belongs to the nucleoid occlusion factor SlmA family. Homodimer. Interacts with FtsZ.

The protein localises to the cytoplasm. The protein resides in the nucleoid. In terms of biological role, required for nucleoid occlusion (NO) phenomenon, which prevents Z-ring formation and cell division over the nucleoid. Acts as a DNA-associated cell division inhibitor that binds simultaneously chromosomal DNA and FtsZ, and disrupts the assembly of FtsZ polymers. SlmA-DNA-binding sequences (SBS) are dispersed on non-Ter regions of the chromosome, preventing FtsZ polymerization at these regions. In Escherichia coli (strain 55989 / EAEC), this protein is Nucleoid occlusion factor SlmA.